The primary structure comprises 587 residues: Sorting nexin 2A (587 aa).

Disordered stretches follow at residues 1 to 78 (MMGS…DSDP) and 115 to 151 (SPFD…SSSD). 2 stretches are compositionally biased toward polar residues: residues 42–59 (NGDT…TLSN) and 123–134 (SEINGTEDNSLH). Low complexity predominate over residues 135–150 (SQFSDSLSRSPSSSSS). Position 144 is a phosphoserine (Ser-144). In terms of domain architecture, PX spans 157 to 277 (VSNPQKEQEI…KVFLQVQGKL (121 aa)). 3 residues coordinate a 1,2-diacyl-sn-glycero-3-phospho-(1D-myo-inositol-3-phosphate): Arg-201, Lys-227, and Arg-244. The BAR domain maps to 331–586 (LRQSVSNDWG…TSQYDREKQS (256 aa)).

The protein belongs to the sorting nexin family. Homodimer. Heterodimer with SNX1 or SNX2A. Component of the retromer complex which consists of VPS29 (MAG1), VPS26 (VPS26A or VPS26B), VPS35 (VPS35A or VPS35B or VPS35C), VPS5/17 (SNX1 or SNX2A or SNX2B). As to expression, ubiquitously expressed but at a lower level in flowers, siliques, and senescing leaves.

It localises to the cytoplasm. The protein resides in the endosome membrane. The protein localises to the prevacuolar compartment membrane. It is found in the golgi apparatus. Its subcellular location is the trans-Golgi network membrane. Its function is as follows. Plays a role in vesicular protein sorting. Acts at the crossroads between the secretory and endocytic pathways. Is involved in the endosome to vacuole protein transport and, as component of the membrane-associated retromer complex, is also involved in endosome-to-Golgi retrograde transport. Also involved in the efficient sorting of seed storage protein globulin 12S. This Arabidopsis thaliana (Mouse-ear cress) protein is Sorting nexin 2A (SNX2A).